The chain runs to 387 residues: Methyltransferase phomM (387 aa).

The tract at residues Pro98–Leu223 is methyltransferase domain.

It belongs to the class I-like SAM-binding methyltransferase superfamily. Erg6/SMT family.

The protein operates within mycotoxin biosynthesis. Functionally, methyltransferase; part of the gene cluster that mediates the biosynthesis of the phomopsins, a group of hexapeptide mycotoxins which infects lupins and causes lupinosis disease in livestock. Within the pathway, phomM acts as an S-adenosylmethionine-dependent alpha-N-methyltransferase that catalyzes two successive N-methylation reactions, converting N-desmethyl-phomopsin A to phomopsin A and phomopsin A further to an N,N-dimethylated congener called phomopsin E. The pathway starts with the processing of the precursor phomA by several endopeptidases including kexin proteases as well as the cluster-specific S41 family peptidase phomP1 and the oligopeptidase phomG to produce 10 identical copies of the hexapeptide Tyr-Val-Ile-Pro-Ile-Asp. After being excised from the precursor peptide, the core peptides are cyclized and modified post-translationally by enzymes encoded within the gene cluster. The timing and order of proteolysis of the phomA precursor and PTMs are still unknown. Two tyrosinase-like enzymes, phomQ1 and phomQ2, catalyze the chlorination and hydroxylation of Tyr, respectively. PhomYb, is proposed to be involved in the construction of the macrocyclic structure. The other 4 ustYa family proteins may be involved in PTMs that generate the unique structure of phomopsin A. PhomYa is required for the hydroxylation of C-beta of Tyr. PhomYc, phomYd, and phomYe are responsible for the biosynthesis of 2,3-dehydroisoleucine (dIle), 2,3-dehydroaspartic acid (dAsp), and 3,4-dehydroproline (dPro), respectively. While dIle formation by phomYc is indispensable for the installation of dAsp by phomYd, the order of the other PTMs have not been elucidated yet. Most of the biosynthetic enzymes likely have broad substrate specificity, and thus, there might be a metabolic grid from a precursor to phomopsin A. The enzyme(s) responsible for the biosynthesis of 3,4-dehydrovaline (dVal) have also not been identified yet. Finally, phomM acts as an S-adenosylmethionine-dependent alpha-N-methyltransferase that catalyzes two successive N-methylation reactions, converting N-desmethyl-phomopsin A to phomopsin A and phomopsin A further to an N,N-dimethylated congener called phomopsin E. This chain is Methyltransferase phomM, found in Diaporthe leptostromiformis (Lupinosis disease fungus).